We begin with the raw amino-acid sequence, 251 residues long: DNA repair protein RecO (251 aa).

The protein belongs to the RecO family.

Functionally, involved in DNA repair and RecF pathway recombination. The protein is DNA repair protein RecO of Staphylococcus saprophyticus subsp. saprophyticus (strain ATCC 15305 / DSM 20229 / NCIMB 8711 / NCTC 7292 / S-41).